Consider the following 363-residue polypeptide: Electron transfer flavoprotein subunit alpha, mitochondrial (363 aa).

The N-terminal 24 residues, 1–24 (MTRTVLLRALTKNKFVASNAPRSI), are a transit peptide targeting the mitochondrion. 303–331 (LYMAFGVSGAIQHLAGIKDSKVIVAVNKD) contributes to the FAD binding site.

The protein belongs to the ETF alpha-subunit/FixB family. As to quaternary structure, heterodimer of an alpha and a beta subunit. Requires FAD as cofactor.

The protein resides in the mitochondrion matrix. The electron transfer flavoprotein serves as a specific electron acceptor for several dehydrogenases, including five acyl-CoA dehydrogenases, glutaryl-CoA and sarcosine dehydrogenase. It transfers the electrons to the main mitochondrial respiratory chain via ETF-ubiquinone oxidoreductase (ETF dehydrogenase). Involved in leucine catabolism and in phytol degradation. This Arabidopsis thaliana (Mouse-ear cress) protein is Electron transfer flavoprotein subunit alpha, mitochondrial (ETFA).